An 86-amino-acid chain; its full sequence is UPF0297 protein LCABL_08470 (86 aa).

Belongs to the UPF0297 family.

The protein is UPF0297 protein LCABL_08470 of Lacticaseibacillus casei (strain BL23) (Lactobacillus casei).